The primary structure comprises 386 residues: MNVYQLKEELIEYAKSIGVDKIGFTTADTFDSLKDRLILQESLGYLSGFEEPDIEKRVTPKLLLPKAKSIVAIALAYPSRMKDAPRSTRTERRGIFCRASWGKDYHDVLREKLDLLEDFLKSKHEDIRTKSMVDTGELSDRAVAERAGIGFSAKNCMITTPEYGSYVYLAEMITNIPFEPDVPIEDMCGSCTKCLDACPTGALVNPGQLNAQRCISFLTQTKGFLPDEFRTKIGNRLYGCDTCQTVCPLNKGKDFHLHPEMEPDPEIAKPLLKPLLAISNREFKEKFGHVSGSWRGKKPIQRNAILALAHFKDASALPELTELMHKDPRPVIRGTAAWAIGKIGDPAYAEELEKALEKEKDEEAKLEIEKGIELLKASGMTKQGLS.

Cob(II)alamin contacts are provided by residues Arg-57, Cys-97, Asp-134, 139–141, Ser-152, Asn-155, Ile-158, and Leu-169; that span reads SDR. Asp-134 serves as the catalytic Proton donor. The 4Fe-4S ferredoxin-type domain maps to 178–208; sequence FEPDVPIEDMCGSCTKCLDACPTGALVNPGQ. 5 residues coordinate [4Fe-4S] cluster: Cys-188, Cys-191, Cys-194, Cys-198, and Cys-214. Residue Ser-216 participates in cob(II)alamin binding. 2 residues coordinate tRNA: Gln-220 and Lys-222. [4Fe-4S] cluster contacts are provided by Cys-240, Cys-243, and Cys-247. 240 to 241 provides a ligand contact to cob(II)alamin; sequence CD. The tRNA site is built by Asn-280, Arg-281, Arg-295, Lys-297, and Lys-298. Residues 333–357 form an HEAT-like PBS-type repeat; that stretch reads RGTAAWAIGKIGDPAYAEELEKALE.

This sequence belongs to the QueG family. Monomer. Cob(II)alamin serves as cofactor. [4Fe-4S] cluster is required as a cofactor.

The protein localises to the cytoplasm. It catalyses the reaction epoxyqueuosine(34) in tRNA + AH2 = queuosine(34) in tRNA + A + H2O. Its pathway is tRNA modification; tRNA-queuosine biosynthesis. Catalyzes the conversion of epoxyqueuosine (oQ) to queuosine (Q), which is a hypermodified base found in the wobble positions of tRNA(Asp), tRNA(Asn), tRNA(His) and tRNA(Tyr). This Bacillus subtilis (strain 168) protein is Epoxyqueuosine reductase.